Here is a 348-residue protein sequence, read N- to C-terminus: Protein pof5 (348 aa).

This sequence to yeast YDR306C. As to quaternary structure, interacts with skp1.

It localises to the mitochondrion. This Schizosaccharomyces pombe (strain 972 / ATCC 24843) (Fission yeast) protein is Protein pof5 (pof5).